Consider the following 158-residue polypeptide: C-type lectin (158 aa).

Positions 1-23 (MGHFTFISLCLMPIFLSLSGAEC) are cleaved as a signal peptide. 4 disulfide bridges follow: Cys-26-Cys-37, Cys-54-Cys-154, Cys-61-Cys-156, and Cys-129-Cys-146. The C-type lectin domain maps to 33–155 (RNGLCYKLFD…CESLFAFICR (123 aa)). Residues Asn-111 and Asn-121 are each glycosylated (N-linked (GlcNAc...) asparagine). The Mannose-binding motif lies at 119-121 (EPN). Ca(2+) is bound by residues Glu-127, Asn-142, and Asp-143.

It belongs to the true venom lectin family. In terms of assembly, homodimer; non-covalently linked. In terms of tissue distribution, expressed by the venom gland.

The protein resides in the secreted. In terms of biological role, mannose-binding lectin which recognizes specific carbohydrate structures and agglutinates a variety of animal cells by binding to cell-surface glycoproteins and glycolipids. May be a calcium-dependent lectin. The chain is C-type lectin from Micrurus corallinus (Brazilian coral snake).